The chain runs to 67 residues: Conotoxin TxMMSK-01 (67 aa).

An N-terminal signal peptide occupies residues 1–20; sequence MMSKLGVLLITCLLLFPLTA. A propeptide spanning residues 21–53 is cleaved from the precursor; that stretch reads VPLDGDQPADQPAERLQDDISSENHPFFDPVKR. 3 disulfides stabilise this stretch: Cys-54/Cys-66, Cys-55/Cys-62, and Cys-59/Cys-65. Pro-64 bears the 4-hydroxyproline mark. Cys-66 bears the Cysteine amide mark.

The protein belongs to the conotoxin M superfamily. As to expression, expressed by the venom duct.

It is found in the secreted. In Conus textile (Cloth-of-gold cone), this protein is Conotoxin TxMMSK-01.